A 365-amino-acid chain; its full sequence is 3-dehydroquinate synthase (365 aa).

Residues glycine 106–aspartate 110, threonine 130–threonine 131, lysine 142, lysine 151, and phenylalanine 169–threonine 172 each bind NAD(+). Zn(2+)-binding residues include glutamate 184, histidine 247, and histidine 264.

It belongs to the sugar phosphate cyclases superfamily. Dehydroquinate synthase family. The cofactor is NAD(+). It depends on Co(2+) as a cofactor. Requires Zn(2+) as cofactor.

It localises to the cytoplasm. The catalysed reaction is 7-phospho-2-dehydro-3-deoxy-D-arabino-heptonate = 3-dehydroquinate + phosphate. It participates in metabolic intermediate biosynthesis; chorismate biosynthesis; chorismate from D-erythrose 4-phosphate and phosphoenolpyruvate: step 2/7. Functionally, catalyzes the conversion of 3-deoxy-D-arabino-heptulosonate 7-phosphate (DAHP) to dehydroquinate (DHQ). This is 3-dehydroquinate synthase from Listeria monocytogenes serotype 4b (strain F2365).